The following is a 1724-amino-acid chain: Protein mono-ADP-ribosyltransferase PARP4 (1724 aa).

The BRCT domain occupies 1 to 94; sequence MVMGIFANCI…RLLDVKNYDP (94 aa). The short motif at 19 to 25 is the Nuclear localization signal element; that stretch reads PQQQKKK. The interval 97 to 123 is disordered; sequence PLDITPPPDQKASSSEVKTEGLCPDSA. Phosphothreonine occurs at positions 101 and 333. In terms of domain architecture, PARP alpha-helical spans 242–370; sequence SEQLQALLLE…ETNLSKPNPP (129 aa). A PARP catalytic domain is found at 369–573; it reads PPSLAKYRAL…FSMPGDQIKD (205 aa). One can recognise a VIT domain in the interval 607–735; it reads SSTKAGLQDA…KVLIKITYIT (129 aa). One can recognise a VWFA domain in the interval 876–1046; that stretch reads EVIICLDCSS…KQIEDQMTRL (171 aa). Position 1236 is a phosphoserine (Ser1236). The short motif at 1237–1249 is the Nuclear localization signal element; the sequence is KRKHRKIPFSKRK. A Phosphoserine modification is found at Ser1335. The segment at 1408–1452 is disordered; that stretch reads SAQSAPLQHPGGFTTRPSAGTFPELDSPQLHFSLPTDPDPIRGFG. An Asymmetric dimethylarginine modification is found at Arg1476. Residue Ser1504 is modified to Phosphoserine. An interaction with the major vault protein region spans residues 1562 to 1724; it reads VCIQHWQDAV…LHRVLHYSQG (163 aa).

It belongs to the ARTD/PARP family. As to quaternary structure, component of the vault ribonucleoprotein particle, at least composed of MVP, PARP4 and one or more vault RNAs (vRNAs). Interacts with TEP1. As to expression, widely expressed; the highest levels are in the kidney; also detected in heart, placenta, lung, liver, skeletal muscle, spleen, leukocytes and pancreas.

The protein localises to the cytoplasm. It is found in the nucleus. The protein resides in the cytoskeleton. It localises to the spindle. It catalyses the reaction L-aspartyl-[protein] + NAD(+) = 4-O-(ADP-D-ribosyl)-L-aspartyl-[protein] + nicotinamide. The catalysed reaction is L-glutamyl-[protein] + NAD(+) = 5-O-(ADP-D-ribosyl)-L-glutamyl-[protein] + nicotinamide. Mono-ADP-ribosyltransferase that mediates mono-ADP-ribosylation of target proteins. The polypeptide is Protein mono-ADP-ribosyltransferase PARP4 (Homo sapiens (Human)).